The primary structure comprises 121 residues: Protein VraC (121 aa).

This is Protein VraC (vraC) from Staphylococcus aureus (strain Mu3 / ATCC 700698).